A 520-amino-acid polypeptide reads, in one-letter code: Transcription factor MYB33 (520 aa).

Residues 1–24 (MSYTSTDSDHNESPAADDNGSDCR) form a disordered region. 2 HTH myb-type domains span residues 29 to 81 (GHAL…ANHL) and 82 to 136 (RPNL…KRRQ). 2 consecutive DNA-binding regions (H-T-H motif) follow at residues 57–81 (WNAVQKHTSLFRCGKSCRLRWANHL) and 109–132 (WARMAAHLPGRTDNEIKNYWNTRI). Positions 331–342 (SSSPPHSDLLDP) are enriched in low complexity. Disordered regions lie at residues 331–359 (SSSPPHSDLLDPFDTYIQSPPPPTGGEES) and 426–447 (EMSTQNADETPPRQREKKRKPL).

As to expression, mostly expressed in stems, shoot apices, flowers and floral shoot tips, and, to a lower extent, in roots (e.g. root tips), seedlings, leaves and siliques.

It is found in the nucleus. Transcriptional activator of alpha-amylase expression that binds to 5'-CAACTGTC-3' motif in target gene promoter. Positive regulator of abscisic acid (ABA) responses leading to growth arrest during seed germination. In vegetative tissues, inhibits growth by reducing cell proliferation. Promotes the expression of aleurone-related genes (e.g. CP1, CP, GASA1, BXL1 and BXL2) in seeds. Together with MYB65 and MYB101, promotes the programmed cell death (PCD) the vacuolation of protein storage vacuoles (PSVs) in the aleurone layers during seed germination. Binds to a GARE site (GA-response element) in the LEAFY promoter, essential for its gibberellic acid (GA)-mediated induction. Together with MYB65, facilitates anther and tapetum development. This chain is Transcription factor MYB33, found in Arabidopsis thaliana (Mouse-ear cress).